Reading from the N-terminus, the 115-residue chain is Meiotically up-regulated gene 42 protein (115 aa).

Functionally, has a role in meiosis. The protein is Meiotically up-regulated gene 42 protein (mug42) of Schizosaccharomyces pombe (strain 972 / ATCC 24843) (Fission yeast).